The primary structure comprises 957 residues: Isoleucine--tRNA ligase (957 aa).

The 'HIGH' region signature appears at 57 to 67 (PYANGDIHIGH). Residue Glu594 coordinates L-isoleucyl-5'-AMP. Residues 635 to 639 (KMSKS) carry the 'KMSKS' region motif. Lys638 lines the ATP pocket. Zn(2+) contacts are provided by Cys920, Cys923, Cys940, and Cys943.

Belongs to the class-I aminoacyl-tRNA synthetase family. IleS type 1 subfamily. As to quaternary structure, monomer. Zn(2+) is required as a cofactor.

It is found in the cytoplasm. The catalysed reaction is tRNA(Ile) + L-isoleucine + ATP = L-isoleucyl-tRNA(Ile) + AMP + diphosphate. In terms of biological role, catalyzes the attachment of isoleucine to tRNA(Ile). As IleRS can inadvertently accommodate and process structurally similar amino acids such as valine, to avoid such errors it has two additional distinct tRNA(Ile)-dependent editing activities. One activity is designated as 'pretransfer' editing and involves the hydrolysis of activated Val-AMP. The other activity is designated 'posttransfer' editing and involves deacylation of mischarged Val-tRNA(Ile). The polypeptide is Isoleucine--tRNA ligase (Laribacter hongkongensis (strain HLHK9)).